Reading from the N-terminus, the 84-residue chain is MVIIRLARGGSKKRPFYNIVATDSRNRRDGRFIERVGFYNPVATKGEALRIAQDRLTYWQGVGAQLSPTVQRLVKEAQKAQPAA.

The protein belongs to the bacterial ribosomal protein bS16 family.

The polypeptide is Small ribosomal subunit protein bS16 (Burkholderia multivorans (strain ATCC 17616 / 249)).